We begin with the raw amino-acid sequence, 115 residues long: NADH-ubiquinone oxidoreductase chain 3 (115 aa).

A run of 3 helical transmembrane segments spans residues 4–24 (LVALSVNIALSMCLITIAFWL), 55–75 (FFLVAITFLLFDLEIALLLPL), and 87–107 (MMLTSFILVSVLALGLAYEWM).

This sequence belongs to the complex I subunit 3 family. In terms of assembly, core subunit of respiratory chain NADH dehydrogenase (Complex I) which is composed of 45 different subunits. Interacts with TMEM186. Interacts with TMEM242.

It localises to the mitochondrion inner membrane. It catalyses the reaction a ubiquinone + NADH + 5 H(+)(in) = a ubiquinol + NAD(+) + 4 H(+)(out). Core subunit of the mitochondrial membrane respiratory chain NADH dehydrogenase (Complex I) which catalyzes electron transfer from NADH through the respiratory chain, using ubiquinone as an electron acceptor. Essential for the catalytic activity of complex I. This Habromys lophurus (Crested-tailed deer mouse) protein is NADH-ubiquinone oxidoreductase chain 3.